Reading from the N-terminus, the 512-residue chain is Ribonuclease Y (512 aa).

A helical membrane pass occupies residues 2-22 (VGMYIIIPIVTFIIGGLLAWL). In terms of domain architecture, KH spans 202 to 262 (SITVFHIESD…VRREIARLAL (61 aa)). An HD domain is found at 328–421 (LLQHARETAN…VQVCDAISGA (94 aa)).

It belongs to the RNase Y family.

The protein localises to the cell membrane. Functionally, endoribonuclease that initiates mRNA decay. The sequence is that of Ribonuclease Y from Parabacteroides distasonis (strain ATCC 8503 / DSM 20701 / CIP 104284 / JCM 5825 / NCTC 11152).